Reading from the N-terminus, the 1357-residue chain is Regulator of V-ATPase in vacuolar membrane protein 1 (1357 aa).

8 WD repeats span residues 98–134 (HDDT…GVYQ), 142–182 (KQPK…GEQA), 190–239 (PHPK…KNHT), 384–423 (GHNK…HGVS), 431–470 (QTES…KEDS), 595–636 (INTG…LEYE), 638–679 (TFHN…YTNN), and 898–939 (QKSI…RIAY). Residues 1243-1357 (GSPSASDIES…ITKNLLDDFV (115 aa)) are disordered. Residues S1244 and S1248 each carry the phosphoserine modification. The span at 1272–1288 (STSSNSLAQSSSSAPRS) shows a compositional bias: low complexity. The span at 1320–1332 (SENRKDKLSKDIL) shows a compositional bias: basic and acidic residues.

In terms of assembly, component of the RAVE complex composed of RAV1, RAV2 and CBF3D/SKP1. Within the complex, it interacts directly with RAV2 and CBF3D. Interacts with the V-ATPase V1 subunits VMA1, VMA2 and VMA8.

It localises to the endomembrane system. Component of the RAVE complex, which is required for stable assembly of the vacuolar ATPase complex V-ATPase under many conditions. Required for transport between the early endosome and the late endosome/prevacuolar compartment (PVC), suggesting that assembly of vacuolar ATPase at the early endosome is required for transport from the early endosome to the PVC. The sequence is that of Regulator of V-ATPase in vacuolar membrane protein 1 (RAV1) from Saccharomyces cerevisiae (strain ATCC 204508 / S288c) (Baker's yeast).